The sequence spans 51 residues: UPF0181 protein VV2_0310 (51 aa).

Belongs to the UPF0181 family.

The sequence is that of UPF0181 protein VV2_0310 from Vibrio vulnificus (strain CMCP6).